The following is a 38-amino-acid chain: Large ribosomal subunit protein bL36 (38 aa).

It belongs to the bacterial ribosomal protein bL36 family.

The sequence is that of Large ribosomal subunit protein bL36 from Lactobacillus acidophilus (strain ATCC 700396 / NCK56 / N2 / NCFM).